Consider the following 159-residue polypeptide: Protein Smg homolog (159 aa).

The protein belongs to the Smg family.

The polypeptide is Protein Smg homolog (Vibrio campbellii (strain ATCC BAA-1116)).